Here is a 44-residue protein sequence, read N- to C-terminus: Large ribosomal subunit protein bL34 (44 aa).

It belongs to the bacterial ribosomal protein bL34 family.

The chain is Large ribosomal subunit protein bL34 from Ehrlichia ruminantium (strain Gardel).